The chain runs to 191 residues: Probable DNA-directed RNA polymerase subunit delta (191 aa).

The 70-residue stretch at 14–83 folds into the HTH HARE-type domain; it reads LSMIEVARAI…GDNKWGLRSW (70 aa). 2 stretches are compositionally biased toward acidic residues: residues 119–133 and 143–191; these read EDAI…EDEN and YDND…ETND. The disordered stretch occupies residues 119-191; the sequence is EDAIDYNDDD…DDDYEDETND (73 aa).

The protein belongs to the RpoE family. RNAP is composed of a core of 2 alpha, a beta and a beta' subunits. The core is associated with a delta subunit and one of several sigma factors.

Functionally, participates in both the initiation and recycling phases of transcription. In the presence of the delta subunit, RNAP displays an increased specificity of transcription, a decreased affinity for nucleic acids, and an increased efficiency of RNA synthesis because of enhanced recycling. In Streptococcus thermophilus (strain ATCC BAA-491 / LMD-9), this protein is Probable DNA-directed RNA polymerase subunit delta.